Here is a 399-residue protein sequence, read N- to C-terminus: MSIFYSFSALRGLAMGIFSPIWILYLISKDYDFLQIGLMGAVLEIAKLIFEVPSGVFADRYGIKISIASSFFFSILTWAFFPFIDSAAICILAMIIWALSDSLISGSFETWMSRVAGEDRFGKEMMKNTQLLITFLIIGSIASGYLYSLNIYFPFLLVMVIYLLLFIWMSVFIKVPSVSETNHGDQNQHDSIKIIKESLKIIFNKKRVLLIVIAGFFTATAYDTISRYWQPFLSDLGFSEKSLGYIFALGGFTALVLLTLTIRFEKKIEKNPYLALTSLDSMGMVMTFLLSRAFRPLGIPCTAFLLAIEDIHHPIVTSYLNKFFPDSYKNTLFSLNSGVGAIGEILSGVIFGIISAAFGLSAMFVVVAVFLLIPIILYTIVPKIKDNDMKVQIEKSQQV.

10 helical membrane-spanning segments follow: residues 7–27, 33–53, 79–99, 131–151, 153–173, 208–228, 242–262, 296–316, 335–355, and 357–377; these read FSALRGLAMGIFSPIWILYLI, FLQIGLMGAVLEIAKLIFEVP, AFFPFIDSAAICILAMIIWAL, LLITFLIIGSIASGYLYSLNI, FPFLLVMVIYLLLFIWMSVFI, VLLIVIAGFFTATAYDTISRY, SLGYIFALGGFTALVLLTLTI, PLGIPCTAFLLAIEDIHHPIV, LNSGVGAIGEILSGVIFGIIS, and AFGLSAMFVVVAVFLLIPIIL.

This sequence belongs to the major facilitator superfamily. Drug:H(+) antiporter-3 (DHA3) (TC 2.A.1.21) family.

The protein resides in the cell membrane. This is an uncharacterized protein from Bacillus subtilis (strain 168).